The following is a 224-amino-acid chain: BOS complex subunit TMEM147 (224 aa).

Residues 1–21 (MTLFHFGNCFALAYFPYFITY) form a helical membrane-spanning segment. Residues 22–34 (KCSGLSEYNAFWK) lie on the Cytoplasmic side of the membrane. Residues 35-58 (CVQAGVTYLFVQLCKMLFLATFFP) traverse the membrane as a helical segment. The Lumenal portion of the chain corresponds to 59–66 (TWEGGIYD). The helical transmembrane segment at 67 to 88 (FIGEFMKASVDVADLIGLNLVM) threads the bilayer. Residues 89–98 (SRNAGKGEYK) are Cytoplasmic-facing. A helical membrane pass occupies residues 99–124 (IMVAALGWATAELIMSRCIPLWVGAR). The Lumenal segment spans residues 125 to 129 (GIEFD). Residues 130–155 (WKYIQMSIDSNISLVHYIVASAQVWM) form a helical membrane-spanning segment. The Cytoplasmic segment spans residues 156–164 (ITRYDLYHT). A helical membrane pass occupies residues 165–187 (FRPAVLLLMFLSVYKAFVMETFV). The Lumenal segment spans residues 188–194 (HLCSLGS). The helical transmembrane segment at 195-216 (WTALLARAVVTGLLALSTLALY) threads the bilayer. Topologically, residues 217–224 (VAVVNVHS) are cytoplasmic.

The protein belongs to the TMEM147 family. Component of the back of Sec61 (BOS) complex, composed of NCLN/Nicalin, NOMO1 and TMEM147. The BOS complex is part of the multi-pass translocon (MPT) complex, composed of three subcomplexes, the GEL complex (composed of RAB5IF/OPTI and TMCO1), the BOS complex (composed of NCLN/Nicalin, NOMO1 and TMEM147) and the PAT complex (composed of WDR83OS/Asterix and CCDC47). The MPT complex associates with the SEC61 complex. Interacts with CHRM3, CHRM1 and AVPR2. Interacts with LBR; promoting LBR localization to the nucleus inner membrane. Interacts with DHCR7.

The protein resides in the endoplasmic reticulum membrane. The protein localises to the nucleus membrane. It is found in the cell membrane. Functionally, component of the multi-pass translocon (MPT) complex that mediates insertion of multi-pass membrane proteins into the lipid bilayer of membranes. The MPT complex takes over after the SEC61 complex: following membrane insertion of the first few transmembrane segments of proteins by the SEC61 complex, the MPT complex occludes the lateral gate of the SEC61 complex to promote insertion of subsequent transmembrane regions. Also acts as a negative regulator of CHRM3 function, most likely by interfering with its trafficking to the cell membrane. Negatively regulates CHRM3-mediated calcium mobilization and activation of RPS6KA1/p90RSK activity. Regulates LBR localization to the nucleus inner membrane. The protein is BOS complex subunit TMEM147 of Canis lupus familiaris (Dog).